The chain runs to 460 residues: GTPase Der (460 aa).

2 consecutive EngA-type G domains span residues 4–174 (PQVA…PRRE) and 184–361 (PKIA…AERS). GTP-binding positions include 10 to 17 (GRPNVGKS), 57 to 61 (DTGGL), 126 to 129 (NKAE), 190 to 197 (GRPNVGKS), 237 to 241 (DTAGI), and 302 to 305 (NKWD). Residues 362-446 (RRIPTAELNQ…PIELVFRERE (85 aa)) enclose the KH-like domain.

This sequence belongs to the TRAFAC class TrmE-Era-EngA-EngB-Septin-like GTPase superfamily. EngA (Der) GTPase family. In terms of assembly, associates with the 50S ribosomal subunit.

GTPase that plays an essential role in the late steps of ribosome biogenesis. This Thermomicrobium roseum (strain ATCC 27502 / DSM 5159 / P-2) protein is GTPase Der.